The sequence spans 546 residues: Probable protein kinase UbiB (546 aa).

One can recognise a Protein kinase domain in the interval aspartate 123–leucine 501. Residues leucine 129–valine 137 and lysine 152 contribute to the ATP site. The active-site Proton acceptor is the aspartate 287. 2 consecutive transmembrane segments (helical) span residues alanine 498–threonine 517 and isoleucine 522–leucine 541.

It belongs to the ABC1 family. UbiB subfamily.

It localises to the cell inner membrane. The protein operates within cofactor biosynthesis; ubiquinone biosynthesis [regulation]. Functionally, is probably a protein kinase regulator of UbiI activity which is involved in aerobic coenzyme Q (ubiquinone) biosynthesis. The protein is Probable protein kinase UbiB of Aeromonas hydrophila subsp. hydrophila (strain ATCC 7966 / DSM 30187 / BCRC 13018 / CCUG 14551 / JCM 1027 / KCTC 2358 / NCIMB 9240 / NCTC 8049).